The primary structure comprises 506 residues: Galactose/methyl galactoside import ATP-binding protein MglA (506 aa).

2 consecutive ABC transporter domains span residues 14 to 249 and 264 to 506; these read LEMS…VGRS and VILE…SLHL. 46 to 53 lines the ATP pocket; the sequence is GENGAGKS.

The protein belongs to the ABC transporter superfamily. Galactose/methyl galactoside importer (TC 3.A.1.2.3) family. As to quaternary structure, the complex is composed of one ATP-binding protein (MglA), two transmembrane proteins (MglC) and a solute-binding protein (MglB).

It is found in the cell inner membrane. The catalysed reaction is D-galactose(out) + ATP + H2O = D-galactose(in) + ADP + phosphate + H(+). It catalyses the reaction methyl beta-D-galactoside(out) + ATP + H2O = methyl beta-D-galactoside(in) + ADP + phosphate + H(+). Functionally, part of the ABC transporter complex MglABC involved in galactose/methyl galactoside import. Responsible for energy coupling to the transport system. In Escherichia coli (strain K12), this protein is Galactose/methyl galactoside import ATP-binding protein MglA.